The following is a 338-amino-acid chain: Anthranilate phosphoribosyltransferase (338 aa).

Residues Gly81, 84-85, Thr89, 91-94, 109-117, and Ala121 contribute to the 5-phospho-alpha-D-ribose 1-diphosphate site; these read GD, NIST, and KHGNRALSS. Gly81 is an anthranilate binding site. Ser93 provides a ligand contact to Mg(2+). Asn112 lines the anthranilate pocket. An anthranilate-binding site is contributed by Arg167. Mg(2+)-binding residues include Asp225 and Glu226.

This sequence belongs to the anthranilate phosphoribosyltransferase family. Homodimer. Mg(2+) serves as cofactor.

The enzyme catalyses N-(5-phospho-beta-D-ribosyl)anthranilate + diphosphate = 5-phospho-alpha-D-ribose 1-diphosphate + anthranilate. It functions in the pathway amino-acid biosynthesis; L-tryptophan biosynthesis; L-tryptophan from chorismate: step 2/5. In terms of biological role, catalyzes the transfer of the phosphoribosyl group of 5-phosphorylribose-1-pyrophosphate (PRPP) to anthranilate to yield N-(5'-phosphoribosyl)-anthranilate (PRA). The sequence is that of Anthranilate phosphoribosyltransferase from Rhizobium etli (strain ATCC 51251 / DSM 11541 / JCM 21823 / NBRC 15573 / CFN 42).